The following is a 629-amino-acid chain: MPIKILSPQLANQIAAGEVVERPASVVKELVENSLDAGANKIQIDIENGGANLIRIRDNGCGIPKEELSLALARHATSKIADLDDLEAILSLGFRGEALASISSVSRLTLTSRTEEQTEAWQVYAQGRDMETTIKPASHPVGTTVEVANLFFNTPARRKFLRTDKTEFAHIDEVIRRIALTKFNTAFTLTHNGKIIRQYRPAEELNQQLKRVAAICGDDFVKNALRIDWKHDDLHLSGWVAKPNFSRTQNDLSYCYINGRMVRDKVISHAIRQAYAQYLPTDAYPAFVLFIDLNPHDVDVNVHPTKHEVRFHQQRLIHDFIYEGISYALNNQEQLNWHTDQSAVENHEENTVREPQPNYSIRPNRAAAGQNSFAPQYHEKPQQNQPHFSNTPVFPNHVSTGYRDYRSDAPSKIEQRLYAELLRTLPPTAQKDISDTAQQNISDTAKIISTEIIECSSHLRALSLIENRALLLQQNQDFFLLSLEKLQRLQWQLALKQIQIEQQPLLIPIVFRLTEAQFQAWQQYSDNFKKIGFEFIENQAQLRLTLNKVPSALRTQNLQKCVMAMLTRDENSSSFLTALCAQLECKTFNTLADALNLLSETERLLTQTNRTAFTQLLKPVNWQPLLDEI.

The protein belongs to the DNA mismatch repair MutL/HexB family.

In terms of biological role, this protein is involved in the repair of mismatches in DNA. It is required for dam-dependent methyl-directed DNA mismatch repair. May act as a 'molecular matchmaker', a protein that promotes the formation of a stable complex between two or more DNA-binding proteins in an ATP-dependent manner without itself being part of a final effector complex. This chain is DNA mismatch repair protein MutL, found in Haemophilus influenzae (strain PittGG).